The primary structure comprises 227 residues: Cytochrome c oxidase subunit 2 (227 aa).

The Mitochondrial intermembrane segment spans residues 1–14; it reads MAYPMQLGFQDATS. The helical transmembrane segment at 15-45 threads the bilayer; the sequence is PIMEELLHFHDHTLMIVFLISSLVLYIISLM. The Mitochondrial matrix portion of the chain corresponds to 46–59; sequence LTTKLTHTSTMDAQ. The chain crosses the membrane as a helical span at residues 60 to 87; sequence EVETIWTILPAIILILIALPSLRILYMM. Over 88–227 the chain is Mitochondrial intermembrane; sequence DEINNPSLTV…YFEKWSASML (140 aa). The Cu cation site is built by His161, Cys196, Glu198, Cys200, His204, and Met207. Glu198 contacts Mg(2+). Tyr218 bears the Phosphotyrosine mark.

It belongs to the cytochrome c oxidase subunit 2 family. As to quaternary structure, component of the cytochrome c oxidase (complex IV, CIV), a multisubunit enzyme composed of 14 subunits. The complex is composed of a catalytic core of 3 subunits MT-CO1, MT-CO2 and MT-CO3, encoded in the mitochondrial DNA, and 11 supernumerary subunits COX4I, COX5A, COX5B, COX6A, COX6B, COX6C, COX7A, COX7B, COX7C, COX8 and NDUFA4, which are encoded in the nuclear genome. The complex exists as a monomer or a dimer and forms supercomplexes (SCs) in the inner mitochondrial membrane with NADH-ubiquinone oxidoreductase (complex I, CI) and ubiquinol-cytochrome c oxidoreductase (cytochrome b-c1 complex, complex III, CIII), resulting in different assemblies (supercomplex SCI(1)III(2)IV(1) and megacomplex MCI(2)III(2)IV(2)). Found in a complex with TMEM177, COA6, COX18, COX20, SCO1 and SCO2. Interacts with TMEM177 in a COX20-dependent manner. Interacts with COX20. Interacts with COX16. Requires Cu cation as cofactor.

Its subcellular location is the mitochondrion inner membrane. The enzyme catalyses 4 Fe(II)-[cytochrome c] + O2 + 8 H(+)(in) = 4 Fe(III)-[cytochrome c] + 2 H2O + 4 H(+)(out). Functionally, component of the cytochrome c oxidase, the last enzyme in the mitochondrial electron transport chain which drives oxidative phosphorylation. The respiratory chain contains 3 multisubunit complexes succinate dehydrogenase (complex II, CII), ubiquinol-cytochrome c oxidoreductase (cytochrome b-c1 complex, complex III, CIII) and cytochrome c oxidase (complex IV, CIV), that cooperate to transfer electrons derived from NADH and succinate to molecular oxygen, creating an electrochemical gradient over the inner membrane that drives transmembrane transport and the ATP synthase. Cytochrome c oxidase is the component of the respiratory chain that catalyzes the reduction of oxygen to water. Electrons originating from reduced cytochrome c in the intermembrane space (IMS) are transferred via the dinuclear copper A center (CU(A)) of subunit 2 and heme A of subunit 1 to the active site in subunit 1, a binuclear center (BNC) formed by heme A3 and copper B (CU(B)). The BNC reduces molecular oxygen to 2 water molecules using 4 electrons from cytochrome c in the IMS and 4 protons from the mitochondrial matrix. The protein is Cytochrome c oxidase subunit 2 (MT-CO2) of Boselaphus tragocamelus (Nilgai).